Here is a 306-residue protein sequence, read N- to C-terminus: uncharacterized protein (306 aa).

The next 9 helical transmembrane spans lie at 13-33, 53-73, 86-106, 112-132, 147-167, 177-197, 214-234, 246-268, and 272-294; these read VLLSQFLNGYEWAVPWIFAFI, PLPMILALFVLHIFMPLFAWG, ITGLTLAVVIPTGITSLIWAA, VGLTLSIILVDTVLSPLIVPL, WGMMKGLIVMVVIPSFLGMLF, AFVSSALSPFSKLCLMAVIAI, AGIAVTVFFIALTGYAAAWLI, VSLIFTGGMRNISAGAVLAVTFF, and VAVPVVIGMLFQQILAALFGYML.

It is found in the cell membrane. This is an uncharacterized protein from Bacillus subtilis (strain 168).